Reading from the N-terminus, the 298-residue chain is DDRGK domain-containing protein 1 (298 aa).

The Lumenal segment spans residues 1–2; it reads ME. Residues 3–23 traverse the membrane as a helical segment; it reads EIFALIVSMILIVAVIPLFFW. Topologically, residues 24–298 are cytoplasmic; it reads KRRRDARSRE…ISGMEEISVS (275 aa). A disordered region spans residues 31-155; the sequence is SREEVAEPPQ…EEEKARQAKE (125 aa). Over residues 101 to 155 the composition is skewed to basic and acidic residues; it reads KRQEREAQRQAEEATRESRNTKQDWYAEMRRKKDEEREAEELKLEEEEKARQAKE.

The protein belongs to the DDRGK1 family.

The protein localises to the endoplasmic reticulum membrane. Its function is as follows. Substrate adapter for ufmylation, the covalent attachment of the ubiquitin-like modifier UFM1 to substrate proteins. The protein is DDRGK domain-containing protein 1 of Arabidopsis thaliana (Mouse-ear cress).